We begin with the raw amino-acid sequence, 60 residues long: uncharacterized protein (60 aa).

This is an uncharacterized protein from Autographa californica nuclear polyhedrosis virus (AcMNPV).